Here is a 308-residue protein sequence, read N- to C-terminus: tRNA pseudouridine synthase B (308 aa).

Catalysis depends on aspartate 45, which acts as the Nucleophile.

Belongs to the pseudouridine synthase TruB family. Type 1 subfamily.

The catalysed reaction is uridine(55) in tRNA = pseudouridine(55) in tRNA. Functionally, responsible for synthesis of pseudouridine from uracil-55 in the psi GC loop of transfer RNAs. The chain is tRNA pseudouridine synthase B from Gloeothece citriformis (strain PCC 7424) (Cyanothece sp. (strain PCC 7424)).